Consider the following 240-residue polypeptide: Ribonuclease PH (240 aa).

Phosphate contacts are provided by residues arginine 87 and 125–127; that span reads GTR.

It belongs to the RNase PH family. As to quaternary structure, homohexameric ring arranged as a trimer of dimers.

It carries out the reaction tRNA(n+1) + phosphate = tRNA(n) + a ribonucleoside 5'-diphosphate. Phosphorolytic 3'-5' exoribonuclease that plays an important role in tRNA 3'-end maturation. Removes nucleotide residues following the 3'-CCA terminus of tRNAs; can also add nucleotides to the ends of RNA molecules by using nucleoside diphosphates as substrates, but this may not be physiologically important. Probably plays a role in initiation of 16S rRNA degradation (leading to ribosome degradation) during starvation. The polypeptide is Ribonuclease PH (Ruminiclostridium cellulolyticum (strain ATCC 35319 / DSM 5812 / JCM 6584 / H10) (Clostridium cellulolyticum)).